Consider the following 845-residue polypeptide: Probable inorganic carbon transporter subunit DabA (845 aa).

The interval 1 to 20 is disordered; sequence MPMASGDESMSARSENPVQS. Positions 345, 347, 516, and 531 each coordinate Zn(2+).

It belongs to the inorganic carbon transporter (TC 9.A.2) DabA family. In terms of assembly, forms a complex with DabB. The cofactor is Zn(2+).

It localises to the cell inner membrane. Its function is as follows. Part of an energy-coupled inorganic carbon pump. In Azotobacter vinelandii (strain DJ / ATCC BAA-1303), this protein is Probable inorganic carbon transporter subunit DabA.